We begin with the raw amino-acid sequence, 335 residues long: Probable peroxidase 26 (335 aa).

The first 18 residues, 1-18 (MVMIHIFLTVMVVGGVSL), serve as a signal peptide directing secretion. Cystine bridges form between C46–C122, C79–C84, C128–C331, and C205–C237. R73 is a catalytic residue. Ca(2+)-binding residues include D78, V81, G83, D85, and S87. Position 168 (P168) interacts with substrate. H198 provides a ligand contact to heme b. S199 contacts Ca(2+). N-linked (GlcNAc...) asparagine glycosylation is present at N216. Positions 255 and 258 each coordinate Ca(2+). N-linked (GlcNAc...) asparagine glycosylation is found at N259 and N273.

The protein belongs to the peroxidase family. Classical plant (class III) peroxidase subfamily. Heme b is required as a cofactor. It depends on Ca(2+) as a cofactor.

It is found in the secreted. It catalyses the reaction 2 a phenolic donor + H2O2 = 2 a phenolic radical donor + 2 H2O. Removal of H(2)O(2), oxidation of toxic reductants, biosynthesis and degradation of lignin, suberization, auxin catabolism, response to environmental stresses such as wounding, pathogen attack and oxidative stress. The enzyme activity has to be proved. The sequence is that of Probable peroxidase 26 (PER26) from Arabidopsis thaliana (Mouse-ear cress).